The chain runs to 204 residues: NAD(P)H dehydrogenase (quinone) (204 aa).

Residues 4–195 (IQIVFYSMYG…AIARFQGAHV (192 aa)) form the Flavodoxin-like domain. FMN-binding positions include 10–15 (SMYGHI) and 83–85 (TRF). Residue Y12 participates in NAD(+) binding. W103 serves as a coordination point for substrate. FMN contacts are provided by residues 118-124 (STATQHG) and H139.

The protein belongs to the WrbA family. FMN is required as a cofactor.

The enzyme catalyses a quinone + NADH + H(+) = a quinol + NAD(+). It carries out the reaction a quinone + NADPH + H(+) = a quinol + NADP(+). This chain is NAD(P)H dehydrogenase (quinone), found in Trichlorobacter lovleyi (strain ATCC BAA-1151 / DSM 17278 / SZ) (Geobacter lovleyi).